The sequence spans 408 residues: Argininosuccinate synthase (408 aa).

ATP contacts are provided by residues 10–18 and Ala37; that span reads AYSGGLDTS. L-citrulline contacts are provided by Tyr90 and Ser95. Residue Gly120 coordinates ATP. L-aspartate-binding residues include Thr122, Asn126, and Asp127. Position 126 (Asn126) interacts with L-citrulline. Residues Arg130, Ser181, Ser190, Glu266, and Tyr278 each contribute to the L-citrulline site.

The protein belongs to the argininosuccinate synthase family. Type 1 subfamily. In terms of assembly, homotetramer.

The protein localises to the cytoplasm. It catalyses the reaction L-citrulline + L-aspartate + ATP = 2-(N(omega)-L-arginino)succinate + AMP + diphosphate + H(+). It functions in the pathway amino-acid biosynthesis; L-arginine biosynthesis; L-arginine from L-ornithine and carbamoyl phosphate: step 2/3. This is Argininosuccinate synthase from Chromobacterium violaceum (strain ATCC 12472 / DSM 30191 / JCM 1249 / CCUG 213 / NBRC 12614 / NCIMB 9131 / NCTC 9757 / MK).